Here is a 340-residue protein sequence, read N- to C-terminus: Phosphoribosylformylglycinamidine cyclo-ligase (340 aa).

It belongs to the AIR synthase family.

Its subcellular location is the cytoplasm. It catalyses the reaction 2-formamido-N(1)-(5-O-phospho-beta-D-ribosyl)acetamidine + ATP = 5-amino-1-(5-phospho-beta-D-ribosyl)imidazole + ADP + phosphate + H(+). It participates in purine metabolism; IMP biosynthesis via de novo pathway; 5-amino-1-(5-phospho-D-ribosyl)imidazole from N(2)-formyl-N(1)-(5-phospho-D-ribosyl)glycinamide: step 2/2. In Streptococcus pneumoniae (strain CGSP14), this protein is Phosphoribosylformylglycinamidine cyclo-ligase.